We begin with the raw amino-acid sequence, 1012 residues long: Cellulose synthase-like protein D5 (1012 aa).

The segment at Met1–Lys81 is disordered. Low complexity predominate over residues Pro20 to Gly37. Basic and acidic residues predominate over residues Gly57–Leu69. A run of 2 helical transmembrane segments spans residues Ile150 to Val170 and Ala180 to Leu200. The active site involves Asp280. The disordered stretch occupies residues Pro597–Asp620. The span at Gly606 to Gly618 shows a compositional bias: gly residues. The active site involves Asp717. 6 helical membrane-spanning segments follow: residues Leu799 to Val819, Thr825 to Val845, Leu871 to Leu891, Ser914 to Val934, Leu948 to Gly968, and Thr978 to Ile998.

This sequence belongs to the glycosyltransferase 2 family. Plant cellulose synthase-like D subfamily.

The protein resides in the golgi apparatus membrane. In terms of biological role, thought to be a Golgi-localized beta-glycan synthase that polymerize the backbones of noncellulosic polysaccharides (hemicelluloses) of plant cell wall. This Oryza sativa subsp. japonica (Rice) protein is Cellulose synthase-like protein D5 (CSLD5).